The primary structure comprises 259 residues: Protein unc-50 homolog (259 aa).

Residues methionine 1–leucine 15 show a composition bias toward polar residues. A disordered region spans residues methionine 1–arginine 22. Residues methionine 1–proline 80 lie on the Cytoplasmic side of the membrane. A helical membrane pass occupies residues alanine 81 to leucine 101. At aspartate 102–threonine 110 the chain is on the lumenal side. The chain crosses the membrane as a helical span at residues leucine 111–methionine 131. The Cytoplasmic segment spans residues tryptophan 132–phenylalanine 162. The helical transmembrane segment at tyrosine 163–isoleucine 183 threads the bilayer. The Lumenal segment spans residues serine 184–tryptophan 198. Residues leucine 199–leucine 219 form a helical membrane-spanning segment. At lysine 220–threonine 222 the chain is on the cytoplasmic side. A helical transmembrane segment spans residues valine 223 to glycine 243. The Lumenal segment spans residues tryptophan 244–glutamine 259.

This sequence belongs to the unc-50 family.

The protein localises to the nucleus inner membrane. It is found in the golgi apparatus membrane. Involved in the cell surface expression of neuronal nicotinic receptors. Binds RNA. The protein is Protein unc-50 homolog (unc50) of Danio rerio (Zebrafish).